We begin with the raw amino-acid sequence, 59 residues long: Alpha-conotoxin CIA (59 aa).

The N-terminal stretch at 1 to 16 (MFTVFLLVVLTITVVS) is a signal peptide. Residues 17–42 (FPSDRASDGRDDEAKDERSDMYKSKR) constitute a propeptide that is removed on maturation. 2 disulfides stabilise this stretch: Cys-46–Cys-51 and Cys-47–Cys-57. Cys-57 carries the cysteine amide modification.

This sequence belongs to the conotoxin A superfamily. In terms of tissue distribution, expressed by the venom duct.

The protein localises to the secreted. Alpha-conotoxins act on postsynaptic membranes, they bind to the nicotinic acetylcholine receptors (nAChR) and thus inhibit them. This toxin blocks the rat muscle nAChRs alpha-1-beta-1-gamma-delta (CHRNA1-CHRNB1-CHRNG-CHRND) (IC(50)=5.7 nM) and the rat neuronal nAChR alpha-3-beta-2/CHRNA3-CHRNB2 (IC(50)=2060 nM). In vivo, intramuscular injection into zebrafish produces rapid flaccid paralysis. This Conus catus (Cat cone) protein is Alpha-conotoxin CIA.